A 214-amino-acid polypeptide reads, in one-letter code: Adenylate kinase (214 aa).

10–15 contacts ATP; sequence GAGKGT. Residues 30–59 are NMP; the sequence is STGDMLRAAIKAGTELGKQAKAVIDAGQLV. AMP-binding positions include threonine 31, arginine 36, 57-59, 85-88, and glutamine 92; these read QLV and GFPR. Residues 122 to 159 form an LID region; sequence GRRAHLPSGRTYHVVYNPPKVEGKDDVTGEDLVVRDDD. Residues arginine 123 and 132–133 each bind ATP; that span reads TY. AMP-binding residues include arginine 156 and arginine 167. Position 200 (lysine 200) interacts with ATP.

This sequence belongs to the adenylate kinase family. As to quaternary structure, monomer.

The protein resides in the cytoplasm. The catalysed reaction is AMP + ATP = 2 ADP. It participates in purine metabolism; AMP biosynthesis via salvage pathway; AMP from ADP: step 1/1. Its function is as follows. Catalyzes the reversible transfer of the terminal phosphate group between ATP and AMP. Plays an important role in cellular energy homeostasis and in adenine nucleotide metabolism. This is Adenylate kinase from Vibrio campbellii (strain ATCC BAA-1116).